Consider the following 580-residue polypeptide: tRNA-guanine(15) transglycosylase (580 aa).

Residue Asp-91 is the Nucleophile of the active site. Substrate is bound by residues Asp-126 and Ala-192. Residues Cys-275, Cys-277, and Cys-280 each contribute to the Zn(2+) site. One can recognise a PUA domain in the interval 504–579 (RMRVVVDEDA…LAVKVRRGVE (76 aa)).

Belongs to the archaeosine tRNA-ribosyltransferase family. Zn(2+) is required as a cofactor.

The enzyme catalyses guanosine(15) in tRNA + 7-cyano-7-deazaguanine = 7-cyano-7-carbaguanosine(15) in tRNA + guanine. It participates in tRNA modification; archaeosine-tRNA biosynthesis. Exchanges the guanine residue with 7-cyano-7-deazaguanine (preQ0) at position 15 in the dihydrouridine loop (D-loop) of archaeal tRNAs. This is tRNA-guanine(15) transglycosylase from Thermococcus kodakarensis (strain ATCC BAA-918 / JCM 12380 / KOD1) (Pyrococcus kodakaraensis (strain KOD1)).